Reading from the N-terminus, the 229-residue chain is Enolase-phosphatase E1 (229 aa).

This sequence belongs to the HAD-like hydrolase superfamily. MasA/MtnC family. Monomer. It depends on Mg(2+) as a cofactor.

It carries out the reaction 5-methylsulfanyl-2,3-dioxopentyl phosphate + H2O = 1,2-dihydroxy-5-(methylsulfanyl)pent-1-en-3-one + phosphate. The protein operates within amino-acid biosynthesis; L-methionine biosynthesis via salvage pathway; L-methionine from S-methyl-5-thio-alpha-D-ribose 1-phosphate: step 3/6. It functions in the pathway amino-acid biosynthesis; L-methionine biosynthesis via salvage pathway; L-methionine from S-methyl-5-thio-alpha-D-ribose 1-phosphate: step 4/6. Functionally, bifunctional enzyme that catalyzes the enolization of 2,3-diketo-5-methylthiopentyl-1-phosphate (DK-MTP-1-P) into the intermediate 2-hydroxy-3-keto-5-methylthiopentenyl-1-phosphate (HK-MTPenyl-1-P), which is then dephosphorylated to form the acireductone 1,2-dihydroxy-3-keto-5-methylthiopentene (DHK-MTPene). This Yersinia pseudotuberculosis serotype O:1b (strain IP 31758) protein is Enolase-phosphatase E1.